We begin with the raw amino-acid sequence, 441 residues long: Putative F-box/FBD/LRR-repeat protein At4g00315 (441 aa).

One can recognise an F-box domain in the interval 1–47 (MDKTSQLPDELLVKVLSFLPTKDAVRTSLLSMRWKSLWMWLPKLEYD). LRR repeat units lie at residues 57-82 (QGLARFITLSLLGHKAPAIESLSLKL), 87-115 (IGSIKPEDIYLWVSLAVHDSNVRELSLKL), 137-164 (ILKLKDEILVDVPRKVCLPSLKTLFLGR), 165-190 (VTYSDEDSLHRLLSNCPVLEDLVVER), 211-236 (LKMSCPCHLDGIMMNTPSLKYLKVTD), 243-271 (SDNESDSDSPRYFYDFEDMPKLEEADFVL), 293-318 (LGVYTEESLYHEGLVFNQLEQLKICS), and 319-344 (CDSDWSILLSRLLESSPNLRELEAYV). Residues 358–410 (QWGNQLNCVPKCLLSSLETFKWSEMYGLLQNQMDVAKYILRNARCLKSATIFF) enclose the FBD domain.

The chain is Putative F-box/FBD/LRR-repeat protein At4g00315 from Arabidopsis thaliana (Mouse-ear cress).